Here is a 191-residue protein sequence, read N- to C-terminus: Guanylate kinase (191 aa).

The Guanylate kinase-like domain occupies 10-188; that stretch reads GQLIVLTGPS…ALHRLVKLIG (179 aa). An ATP-binding site is contributed by 17–24; sequence GPSGVGKG.

Belongs to the guanylate kinase family.

Its subcellular location is the cytoplasm. The catalysed reaction is GMP + ATP = GDP + ADP. Essential for recycling GMP and indirectly, cGMP. This Synechocystis sp. (strain ATCC 27184 / PCC 6803 / Kazusa) protein is Guanylate kinase (gmk).